Consider the following 506-residue polypeptide: Aldehyde dehydrogenase (506 aa).

218-224 contacts NAD(+); sequence GFGLEAG. Active-site residues include glutamate 262 and cysteine 301.

It belongs to the aldehyde dehydrogenase family.

The catalysed reaction is an aldehyde + NAD(+) + H2O = a carboxylate + NADH + 2 H(+). In Rhodospirillum rubrum (strain ATCC 11170 / ATH 1.1.1 / DSM 467 / LMG 4362 / NCIMB 8255 / S1), this protein is Aldehyde dehydrogenase.